The primary structure comprises 280 residues: 4-hydroxy-3-methylbut-2-enyl diphosphate reductase (280 aa).

C12 provides a ligand contact to [4Fe-4S] cluster. (2E)-4-hydroxy-3-methylbut-2-enyl diphosphate is bound by residues H40 and H72. H40 and H72 together coordinate dimethylallyl diphosphate. Isopentenyl diphosphate-binding residues include H40 and H72. C94 is a binding site for [4Fe-4S] cluster. H122 contacts (2E)-4-hydroxy-3-methylbut-2-enyl diphosphate. H122 contacts dimethylallyl diphosphate. H122 provides a ligand contact to isopentenyl diphosphate. The Proton donor role is filled by E124. Position 160 (T160) interacts with (2E)-4-hydroxy-3-methylbut-2-enyl diphosphate. Residue C188 participates in [4Fe-4S] cluster binding. Positions 216, 218, and 260 each coordinate (2E)-4-hydroxy-3-methylbut-2-enyl diphosphate. Dimethylallyl diphosphate-binding residues include S216, N218, and S260. Residues S216, N218, and S260 each contribute to the isopentenyl diphosphate site.

The protein belongs to the IspH family. [4Fe-4S] cluster serves as cofactor.

The catalysed reaction is isopentenyl diphosphate + 2 oxidized [2Fe-2S]-[ferredoxin] + H2O = (2E)-4-hydroxy-3-methylbut-2-enyl diphosphate + 2 reduced [2Fe-2S]-[ferredoxin] + 2 H(+). The enzyme catalyses dimethylallyl diphosphate + 2 oxidized [2Fe-2S]-[ferredoxin] + H2O = (2E)-4-hydroxy-3-methylbut-2-enyl diphosphate + 2 reduced [2Fe-2S]-[ferredoxin] + 2 H(+). It functions in the pathway isoprenoid biosynthesis; dimethylallyl diphosphate biosynthesis; dimethylallyl diphosphate from (2E)-4-hydroxy-3-methylbutenyl diphosphate: step 1/1. Its pathway is isoprenoid biosynthesis; isopentenyl diphosphate biosynthesis via DXP pathway; isopentenyl diphosphate from 1-deoxy-D-xylulose 5-phosphate: step 6/6. In terms of biological role, catalyzes the conversion of 1-hydroxy-2-methyl-2-(E)-butenyl 4-diphosphate (HMBPP) into a mixture of isopentenyl diphosphate (IPP) and dimethylallyl diphosphate (DMAPP). Acts in the terminal step of the DOXP/MEP pathway for isoprenoid precursor biosynthesis. The chain is 4-hydroxy-3-methylbut-2-enyl diphosphate reductase from Trichlorobacter lovleyi (strain ATCC BAA-1151 / DSM 17278 / SZ) (Geobacter lovleyi).